The following is a 503-amino-acid chain: Glycerol kinase (503 aa).

An ADP-binding site is contributed by threonine 14. Positions 14, 15, and 16 each coordinate ATP. Threonine 14 contacts sn-glycerol 3-phosphate. Arginine 18 lines the ADP pocket. Residues arginine 84, glutamate 85, tyrosine 136, and aspartate 246 each coordinate sn-glycerol 3-phosphate. Glycerol-binding residues include arginine 84, glutamate 85, tyrosine 136, aspartate 246, and glutamine 247. ADP is bound by residues threonine 268 and glycine 311. ATP-binding residues include threonine 268, glycine 311, glutamine 315, and glycine 412. Residues glycine 412 and asparagine 416 each coordinate ADP.

Belongs to the FGGY kinase family. As to quaternary structure, homotetramer and homodimer (in equilibrium). Heterodimer with EIIA-Glc. Binds 1 zinc ion per glycerol kinase EIIA-Glc dimer. The zinc ion is important for dimerization.

It carries out the reaction glycerol + ATP = sn-glycerol 3-phosphate + ADP + H(+). The protein operates within polyol metabolism; glycerol degradation via glycerol kinase pathway; sn-glycerol 3-phosphate from glycerol: step 1/1. Activity of this regulatory enzyme is affected by several metabolites. Allosterically and non-competitively inhibited by fructose 1,6-bisphosphate (FBP) and unphosphorylated phosphocarrier protein EIIA-Glc (III-Glc), an integral component of the bacterial phosphotransferase (PTS) system. Its function is as follows. Key enzyme in the regulation of glycerol uptake and metabolism. Catalyzes the phosphorylation of glycerol to yield sn-glycerol 3-phosphate. The protein is Glycerol kinase of Klebsiella pneumoniae (strain 342).